A 415-amino-acid polypeptide reads, in one-letter code: Intron-encoded DNA endonuclease aI3 (415 aa).

The interval Met1–Asn81 is COX1 exons 1 to 3 encoded. A run of 2 helical transmembrane segments spans residues Val16–Ile36 and Val57–Gly77. Residues Gln82–Lys415 are COX1 intron 3 encoded.

In the C-terminal section; belongs to the LAGLIDADG endonuclease family. Requires Mg(2+) as cofactor. Post-translationally, the mature protein may arise from proteolytic cleavage of an in-frame translation of some COX1 exons plus the intron containing the aI3 open reading frame.

It localises to the mitochondrion. The protein resides in the membrane. Functionally, mitochondrial DNA endonuclease involved in intron homing. It introduces a specific double-strand break in the DNA of the COX1 gene and thus mediates the insertion of an intron, containing its own coding sequence (group I intron), into an intronless gene. Recognizes with high specificity and cleaves the sequence 5'-GGTTTTGGTAACTATTTATTAC-3'. This is Intron-encoded DNA endonuclease aI3 (AI3) from Saccharomyces cerevisiae (strain ATCC 204508 / S288c) (Baker's yeast).